The primary structure comprises 1136 residues: Protein stu-1 (1136 aa).

HEAT repeat units follow at residues 95-133 (TLPVVVDKLGDQKDKFRQIAVQALTTLYKVAPVDVERSV) and 167-205 (YVPTLMELLEDADGSVRDVAKTTVIELFKNAPNTAKSDL). Disordered regions lie at residues 524-554 (KDPHNPNAHSRTETGGARPGMGLSKSVMGAP), 567-794 (RAMA…QPQI), and 821-884 (TAGQ…LLDS). A compositionally biased stretch (low complexity) spans 595-622 (VSSTSQASVASASTASAVPAPTKSAFGA). A compositionally biased stretch (pro residues) spans 659-668 (PAEPASPPSK). Polar residues predominate over residues 673-683 (TVTSPKTQTLV). Residues 701 to 716 (SSESGIPIPVSGISSP) are compositionally biased toward low complexity. Composition is skewed to polar residues over residues 777–793 (LPTQKTPSPTEESQQPQ) and 822–833 (AGQTQPQSTYTS).

Belongs to the CLASP family. Interacts with microtubules.

It is found in the nucleus. Its subcellular location is the cytoplasm. The protein resides in the cytoskeleton. It localises to the spindle. Microtubule binding protein that promotes the stabilization of dynamic microtubules. Required for mitotic spindle formation. The polypeptide is Protein stu-1 (stu-1) (Neurospora crassa (strain ATCC 24698 / 74-OR23-1A / CBS 708.71 / DSM 1257 / FGSC 987)).